We begin with the raw amino-acid sequence, 124 residues long: Apolipoprotein C-IV (124 aa).

The N-terminal stretch at 1–27 is a signal peptide; the sequence is MSLLRCRPRDLPSVSLSVLFLVSFVAS. N107 carries N-linked (GlcNAc...) asparagine glycosylation.

This sequence belongs to the apolipoprotein C4 family. Expressed by the liver and secreted in plasma.

The protein localises to the secreted. Its function is as follows. May participate in lipoprotein metabolism. The sequence is that of Apolipoprotein C-IV (Apoc4) from Mus musculus (Mouse).